The sequence spans 874 residues: Oxysterol-binding protein-related protein 5 (874 aa).

A disordered region spans residues 1–71 (MKEEAFLRRR…PQTPGSATKV (71 aa)). Ser12 carries the phosphoserine modification. Positions 93-123 (VSKKDALKAQKENYRQEKKRATKQLFSALTD) form a coiled coil. The PH domain occupies 126 to 243 (VVIMADSLKI…WLDALELALR (118 aa)). 2 disordered regions span residues 255 to 277 (QGRD…GLPT) and 299 to 338 (FSDK…GPWR). Polar residues predominate over residues 261 to 277 (QGSSPDASPSSLYGLPT). Basic and acidic residues predominate over residues 299–308 (FSDKSERENA). Residues 383 to 388 (LSRVVL), 445 to 448 (KPYN), and 477 to 478 (HH) contribute to the a 1,2-diacyl-sn-glycero-3-phospho-(1D-myo-inositol 4-phosphate) site. A 1,2-diacyl-sn-glycero-3-phospho-L-serine contacts are provided by residues 383–388 (LSRVVL) and Asn448. Ser503 contacts a 1,2-diacyl-sn-glycero-3-phospho-L-serine. Basic and acidic residues predominate over residues 660–684 (GDQHKATQEKSVLEEAQRQRAREHQ). Disordered regions lie at residues 660–685 (GDQH…EHQQ) and 739–798 (GQTT…GGES). 3 residues coordinate a 1,2-diacyl-sn-glycero-3-phospho-(1D-myo-inositol 4-phosphate): Lys669, Glu673, and Arg677. Residues Ser746 and Ser749 each carry the phosphoserine modification. The segment covering 754–764 (PSSDRRLRKAS) has biased composition (basic and acidic residues). Residues 765–782 (DQPSGHSQVTESSGSTPE) show a composition bias toward polar residues. The helical transmembrane segment at 855–873 (SWFLLCIFLTCQLFINYIL) threads the bilayer.

It belongs to the OSBP family.

The protein resides in the endoplasmic reticulum membrane. Its function is as follows. Lipid transporter involved in lipid countertransport between the endoplasmic reticulum and the plasma membrane: specifically exchanges phosphatidylserine with phosphatidylinositol 4-phosphate (PI4P), delivering phosphatidylserine to the plasma membrane in exchange for PI4P, which is degraded by the SAC1/SACM1L phosphatase in the endoplasmic reticulum. Binds phosphatidylserine and PI4P in a mutually exclusive manner. May cooperate with NPC1 to mediate the exit of cholesterol from endosomes/lysosomes. Binds 25-hydroxycholesterol and cholesterol. This chain is Oxysterol-binding protein-related protein 5 (Osbpl5), found in Mus musculus (Mouse).